A 353-amino-acid chain; its full sequence is Phenol 2-monooxygenase, reductase component DmpP (353 aa).

The 2Fe-2S ferredoxin-type domain maps to 3–93; it reads YNVTIEPTGE…DLVIEADVDA (91 aa). [2Fe-2S] cluster is bound by residues Cys37, Cys42, Cys45, and Cys77. The FAD-binding FR-type domain occupies 102–201; that stretch reads VEDYRGVVSA…SGPYGQFFVR (100 aa).

The multicomponent enzyme phenol hydroxylase is formed by DmpL (P1 component), DmpM (P2 component), DmpN (P3 component), DmpO (P4 component) and DmpP (P5 component). It depends on FAD as a cofactor. [2Fe-2S] cluster is required as a cofactor.

The enzyme catalyses phenol + NADH + O2 + H(+) = catechol + NAD(+) + H2O. Its pathway is aromatic compound metabolism; phenol degradation. Functionally, part of a multicomponent enzyme which catalyzes the degradation of phenol and some of its methylated derivatives. DmpP probably transfers electrons from NADH, via FAD and the iron-sulfur center, to the oxygenase component of the complex. Required for growth on phenol and for in vitro phenol hydroxylase activity. The protein is Phenol 2-monooxygenase, reductase component DmpP of Pseudomonas sp. (strain CF600).